Here is a 156-residue protein sequence, read N- to C-terminus: Rhombotin-1 (156 aa).

LIM zinc-binding domains lie at 22-84 (KGCA…LFGT) and 86-148 (GNCA…GQLN).

The protein resides in the nucleus. May be involved in gene regulation within neural lineage cells potentially by direct DNA binding or by binding to other transcription factors. This Xenopus laevis (African clawed frog) protein is Rhombotin-1.